The chain runs to 464 residues: Glutamate--tRNA ligase (464 aa).

The short motif at 9-19 (PSPTGYLHIGG) is the 'HIGH' region element. The 'KMSKS' region motif lies at 242 to 246 (KISKR). K245 serves as a coordination point for ATP.

The protein belongs to the class-I aminoacyl-tRNA synthetase family. Glutamate--tRNA ligase type 1 subfamily. Monomer.

The protein localises to the cytoplasm. The catalysed reaction is tRNA(Glu) + L-glutamate + ATP = L-glutamyl-tRNA(Glu) + AMP + diphosphate. In terms of biological role, catalyzes the attachment of glutamate to tRNA(Glu) in a two-step reaction: glutamate is first activated by ATP to form Glu-AMP and then transferred to the acceptor end of tRNA(Glu). The sequence is that of Glutamate--tRNA ligase from Neisseria gonorrhoeae (strain ATCC 700825 / FA 1090).